A 179-amino-acid chain; its full sequence is Phosphopantetheine adenylyltransferase (179 aa).

Ser23 lines the substrate pocket. ATP is bound by residues 23–24 (SF) and His31. Substrate is bound by residues Lys55, Ala87, and Arg101. ATP contacts are provided by residues 102–104 (GIR), Glu112, and 137–143 (FAHVSSS).

It belongs to the bacterial CoaD family. In terms of assembly, homohexamer. It depends on Mg(2+) as a cofactor.

It is found in the cytoplasm. It carries out the reaction (R)-4'-phosphopantetheine + ATP + H(+) = 3'-dephospho-CoA + diphosphate. The protein operates within cofactor biosynthesis; coenzyme A biosynthesis; CoA from (R)-pantothenate: step 4/5. Its function is as follows. Reversibly transfers an adenylyl group from ATP to 4'-phosphopantetheine, yielding dephospho-CoA (dPCoA) and pyrophosphate. This Rhodopirellula baltica (strain DSM 10527 / NCIMB 13988 / SH1) protein is Phosphopantetheine adenylyltransferase.